The following is a 1254-amino-acid chain: Structural polyprotein (1254 aa).

Residues 43–77 (LQAQQMQQLISAVSALTTKQNVKAPKGQRQKKQQK) are host transcription inhibition. The segment at 60-113 (TKQNVKAPKGQRQKKQQKPKEKKENQKKKPTQKKKQQQKPKPQAKKKKPGRRER) is disordered. A Nuclear localization signal motif is present at residues 70–108 (QRQKKQQKPKEKKENQKKKPTQKKKQQQKPKPQAKKKKP). Residues 84–110 (NQKKKPTQKKKQQQKPKPQAKKKKPGR) are compositionally biased toward basic residues. Positions 95–123 (QQQKPKPQAKKKKPGRRERMCMKIENDCI) are binding to the viral RNA. The tract at residues 108 to 122 (PGRRERMCMKIENDC) is ribosome-binding. The cysteines at positions 122 and 137 are disulfide-linked. Residues 122 to 270 (CIFEVKLDGK…RVTPEGTEEW (149 aa)) enclose the Peptidase S3 domain. Histidine 148 functions as the Charge relay system in the catalytic mechanism. The Nuclear export signal signature appears at 153–163 (IDNPDLAKLTY). The segment at 164–169 (KKSSKY) is interaction with spike glycoprotein E2. Aspartate 170 acts as the Charge relay system in catalysis. The dimerization of the capsid protein stretch occupies residues 192–202 (PEGHYNWHHGA). Serine 222 serves as the catalytic Charge relay system. The interval 228-232 (DNKGR) is dimerization of the capsid protein. Residues 271-282 (SAALMMCILANT) form a functions as an uncleaved signal peptide for the precursor of protein E3/E2 region. Residues 271 to 694 (SAALMMCILA…PHEIIQYYYG (424 aa)) lie on the Extracellular side of the membrane. 3 disulfides stabilise this stretch: cysteine 277-cysteine 286, cysteine 291-cysteine 295, and cysteine 294-cysteine 326. N-linked (GlcNAc...) asparagine; by host glycosylation occurs at asparagine 281. N-linked (GlcNAc...) asparagine; by host glycosylation is present at asparagine 328. 6 cysteine pairs are disulfide-bonded: cysteine 353-cysteine 459, cysteine 356-cysteine 362, cysteine 425-cysteine 439, cysteine 487-cysteine 599, cysteine 535-cysteine 559, and cysteine 537-cysteine 554. Interaction with host Mxra8 receptor regions lie at residues 360 to 363 (YFCY) and 396 to 398 (HAH). The segment at 518–521 (TAGN) is interaction with host Mxra8 receptor. Asparagine 534 carries N-linked (GlcNAc...) asparagine; by host glycosylation. Positions 550 to 556 (TINTCKI) are interaction with host Mxra8 receptor. Asparagine 596 carries N-linked (GlcNAc...) asparagine; by host glycosylation. The helical transmembrane segment at 695-715 (LYPAATIAAVSGASLMALLTL) threads the bilayer. At 716-756 (AATCCMLATARRKCLTPYALTPGAVVPLTLGLLCCAPRANA) the chain is on the cytoplasmic side. Cysteine 719 carries S-palmitoyl cysteine; by host lipidation. The segment at 724-728 (TARRK) is interaction with the capsid protein. S-palmitoyl cysteine; by host attachment occurs at residues cysteine 729, cysteine 749, and cysteine 750. The segment at 729 to 749 (CLTPYALTPGAVVPLTLGLLC) is transient transmembrane before p62-6K protein processing. An intrachain disulfide couples cysteine 729 to cysteine 750. Residues 757–771 (ASFAETMAYLWDENK) are Extracellular-facing. Residues 772-792 (TLFWMEFAAPAAALALLACCI) traverse the membrane as a helical segment. Residue lysine 793 is a topological domain, cytoplasmic. The chain crosses the membrane as a helical span at residues 794–814 (SLICCCKPFSFLVLLSLGASA). The Extracellular segment spans residues 815 to 1231 (KAYEHTATIP…AMTWVQRLAS (417 aa)). Disulfide bonds link cysteine 865–cysteine 930, cysteine 878–cysteine 910, cysteine 879–cysteine 912, and cysteine 884–cysteine 894. The segment at 900 to 917 (VYPFMWGGAYCFCDSENT) is E1 fusion peptide loop. The N-linked (GlcNAc...) asparagine; by host glycan is linked to asparagine 957. Disulfide bonds link cysteine 1075/cysteine 1087, cysteine 1117/cysteine 1192, cysteine 1122/cysteine 1196, and cysteine 1144/cysteine 1186. The helical transmembrane segment at 1232 to 1252 (GLGGLALIAVVVLVLVTCITM) threads the bilayer. Cysteine 1249 carries the S-palmitoyl cysteine; by host lipid modification. Cysteine 1249 is lipidated: S-stearoyl cysteine; by host. Residues 1253–1254 (RR) are Cytoplasmic-facing.

In terms of assembly, homodimer. Homomultimer. Interacts with host karyopherin KPNA4; this interaction allows the nuclear import of the viral capsid protein. Interacts with spike glycoprotein E2. Interacts with host IRAK1; the interaction leads to inhibition of IRAK1-dependent signaling. As to quaternary structure, the precursor of protein E3/E2 and E1 form a heterodimer shortly after synthesis. Interacts with spike glycoprotein E2. The precursor of protein E3/E2 and E1 form a heterodimer shortly after synthesis. Processing of the precursor of protein E3/E2 into E2 and E3 results in a heterodimer of the spike glycoproteins E2 and E1. Spike at virion surface are constituted of a trimer of E2-E1 heterodimers. After target cell attachment and endocytosis, E1 change conformation to form homotrimers. Interacts with 6K protein. E1/E2 heterodimer interacts with host LDLR. In terms of assembly, interacts with spike glycoprotein E1. Processing of the precursor of protein E3/E2 into E2 and E3 results in a heterodimer of the spike glycoproteins E2 and E1. Spike at virion surface are constituted of a trimer of E2-E1 heterodimers. Interacts with 6K protein. Interacts with host MXRA8; this interaction mediates virus entry. As to quaternary structure, oligomer. Interacts with spike glycoprotein E1. Interacts with spike glycoprotein E2. In terms of processing, structural polyprotein: Specific enzymatic cleavages in vivo yield mature proteins. Capsid protein is auto-cleaved during polyprotein translation, unmasking a signal peptide at the N-terminus of the precursor of E3/E2. The remaining polyprotein is then targeted to the host endoplasmic reticulum, where host signal peptidase cleaves it into pE2, 6K and E1 proteins. pE2 is further processed to mature E3 and E2 by host furin in trans-Golgi vesicle. Palmitoylated via thioester bonds. These palmitoylations may induce disruption of the C-terminus transmembrane. This would result in the reorientation of E2 C-terminus from lumenal to cytoplasmic side. Post-translationally, N-glycosylated. In terms of processing, palmitoylated via thioester bonds.

Its subcellular location is the virion. It localises to the host cytoplasm. The protein localises to the host cell membrane. The protein resides in the host nucleus. It is found in the virion membrane. Its subcellular location is the host Golgi apparatus. It localises to the host trans-Golgi network. The protein localises to the host endoplasmic reticulum. The catalysed reaction is Autocatalytic release of the core protein from the N-terminus of the togavirus structural polyprotein by hydrolysis of a -Trp-|-Ser- bond.. In terms of biological role, forms an icosahedral capsid with a T=4 symmetry composed of 240 copies of the capsid protein surrounded by a lipid membrane through which penetrate 80 spikes composed of trimers of E1-E2 heterodimers. The capsid protein binds to the viral RNA genome at a site adjacent to a ribosome binding site for viral genome translation following genome release. Possesses a protease activity that results in its autocatalytic cleavage from the nascent structural protein. Following its self-cleavage, the capsid protein transiently associates with ribosomes, and within several minutes the protein binds to viral RNA and rapidly assembles into icosahedric core particles. The resulting nucleocapsid eventually associates with the cytoplasmic domain of the spike glycoprotein E2 at the cell membrane, leading to budding and formation of mature virions. In case of infection, new virions attach to target cells and after clathrin-mediated endocytosis their membrane fuses with the host endosomal membrane. This leads to the release of the nucleocapsid into the cytoplasm, followed by an uncoating event necessary for the genomic RNA to become accessible. The uncoating might be triggered by the interaction of capsid proteins with ribosomes. Binding of ribosomes would release the genomic RNA since the same region is genomic RNA-binding and ribosome-binding. Specifically inhibits interleukin-1 receptor-associated kinase 1/IRAK1-dependent signaling during viral entry, representing a means by which the alphaviruses may evade innate immune detection and activation prior to viral gene expression. Its function is as follows. Provides the signal sequence for the translocation of the precursor of protein E3/E2 to the host endoplasmic reticulum. Furin-cleaved E3 remains associated with spike glycoprotein E1 and mediates pH protection of the latter during the transport via the secretory pathway. After virion release from the host cell, the assembly protein E3 is gradually released in the extracellular space. Plays a role in viral attachment to target host cell, by binding to the cell receptor MXRA8. The host LDLR may also act as a cell receptor for viral entry. Synthesized as a p62 precursor which is processed by furin at the cell membrane just before virion budding, giving rise to E2-E1 heterodimer. The p62-E1 heterodimer is stable, whereas E2-E1 is unstable and dissociate at low pH. p62 is processed at the last step, presumably to avoid E1 fusion activation before its final export to cell surface. E2 C-terminus contains a transitory transmembrane that would be disrupted by palmitoylation, resulting in reorientation of the C-terminal tail from lumenal to cytoplasmic side. This step is critical since E2 C-terminus is involved in budding by interacting with capsid proteins. This release of E2 C-terminus in cytoplasm occurs lately in protein export, and precludes premature assembly of particles at the endoplasmic reticulum membrane. Functionally, acts as a viroporin that participates in virus glycoprotein processing and transport to the plasma membrane, cell permeabilization and budding of viral particles. The cation channel is permeable to Na(+)&gt;K(+)&gt;Ca(2+) in vitro. Disrupts the calcium homeostasis of the cell, probably at the endoplasmic reticulum level. This leads to cytoplasmic calcium elevation. Because of its lipophilic properties, the 6K protein is postulated to influence the selection of lipids that interact with the transmembrane domains of the glycoproteins, which, in turn, affects the deformability of the bilayer required for the extreme curvature that occurs as budding proceeds. Present in low amount in virions, about 3% compared to viral glycoproteins. In terms of biological role, class II viral fusion protein. Fusion activity is inactive as long as E1 is bound to E2 in mature virion. After virus attachment to target cell via host MXRA8 and endocytosis, acidification of the endosome induce dissociation of E1/E2 heterodimer and concomitant trimerization of the E1 subunits. This E1 trimer is fusion active, and promotes release of viral nucleocapsid in cytoplasm after endosome and viral membrane fusion. Efficient fusion requires the presence of cholesterol and sphingolipid in the target membrane. The chain is Structural polyprotein from Aedes (Common banded mosquito).